Reading from the N-terminus, the 213-residue chain is Receptor-binding cancer antigen expressed on SiSo cells (213 aa).

The Extracellular segment spans residues 1–6; sequence MAITQF. Residues 7-27 traverse the membrane as a helical; Signal-anchor for type III membrane protein segment; that stretch reads RLFKFCTCLATVFSFLKRLIC. The Cytoplasmic portion of the chain corresponds to 28 to 213; the sequence is RSGRGRKLSG…EQNKIGVKLS (186 aa). S36 is subject to Phosphoserine. The residue at position 41 (T41) is a Phosphothreonine. Y94 carries the phosphotyrosine modification. The stretch at 163 to 211 forms a coiled coil; the sequence is EDAAWQAEEVLRQQKLADREKRAAEQQRKKMEKEAQRLMKKEQNKIGVK. The span at 178-206 shows a compositional bias: basic and acidic residues; that stretch reads LADREKRAAEQQRKKMEKEAQRLMKKEQN. Residues 178–213 form a disordered region; sequence LADREKRAAEQQRKKMEKEAQRLMKKEQNKIGVKLS.

In terms of assembly, homodimer. As to expression, widely expressed. Expressed in ovary, testis, prostate, thymus, muscle and heart, but not in small intestine, colon, lymph nodes, or peripherical blood lymphocytes. The protein is not detected in any of the above organs.

Its subcellular location is the golgi apparatus membrane. Functionally, may participate in suppression of cell proliferation and induces apoptotic cell death through activation of interleukin-1-beta converting enzyme (ICE)-like proteases. The protein is Receptor-binding cancer antigen expressed on SiSo cells (EBAG9) of Homo sapiens (Human).